The primary structure comprises 101 residues: Small ribosomal subunit protein uS14 (101 aa).

This sequence belongs to the universal ribosomal protein uS14 family. Part of the 30S ribosomal subunit. Contacts proteins S3 and S10.

Binds 16S rRNA, required for the assembly of 30S particles and may also be responsible for determining the conformation of the 16S rRNA at the A site. The chain is Small ribosomal subunit protein uS14 from Bartonella quintana (strain Toulouse) (Rochalimaea quintana).